A 582-amino-acid chain; its full sequence is Adenine deaminase (582 aa).

It belongs to the metallo-dependent hydrolases superfamily. Adenine deaminase family. Requires Mn(2+) as cofactor.

It catalyses the reaction adenine + H2O + H(+) = hypoxanthine + NH4(+). This Oceanobacillus iheyensis (strain DSM 14371 / CIP 107618 / JCM 11309 / KCTC 3954 / HTE831) protein is Adenine deaminase.